A 424-amino-acid polypeptide reads, in one-letter code: tRNA(Met) cytidine acetate ligase (424 aa).

ATP contacts are provided by residues 7-20, Gly-102, Asn-174, and Arg-199; that span reads ITEY…HLHH.

This sequence belongs to the TmcAL family.

It localises to the cytoplasm. It carries out the reaction cytidine(34) in elongator tRNA(Met) + acetate + ATP = N(4)-acetylcytidine(34) in elongator tRNA(Met) + AMP + diphosphate. Functionally, catalyzes the formation of N(4)-acetylcytidine (ac(4)C) at the wobble position of elongator tRNA(Met), using acetate and ATP as substrates. First activates an acetate ion to form acetyladenylate (Ac-AMP) and then transfers the acetyl group to tRNA to form ac(4)C34. The chain is tRNA(Met) cytidine acetate ligase from Alkaliphilus metalliredigens (strain QYMF).